We begin with the raw amino-acid sequence, 275 residues long: Polyamine aminopropyltransferase (275 aa).

The PABS domain maps to 2–235 (DLWLREGQIE…GFWSFTIGSK (234 aa)). An S-methyl-5'-thioadenosine-binding site is contributed by Gln31. Positions 62 and 86 each coordinate spermidine. Residues Glu106 and 137–138 (DG) contribute to the S-methyl-5'-thioadenosine site. The active-site Proton acceptor is the Asp155. 155 to 158 (DSTD) is a binding site for spermidine.

Belongs to the spermidine/spermine synthase family. Homodimer or homotetramer.

It is found in the cytoplasm. It carries out the reaction S-adenosyl 3-(methylsulfanyl)propylamine + putrescine = S-methyl-5'-thioadenosine + spermidine + H(+). It participates in amine and polyamine biosynthesis; spermidine biosynthesis; spermidine from putrescine: step 1/1. Its function is as follows. Catalyzes the irreversible transfer of a propylamine group from the amino donor S-adenosylmethioninamine (decarboxy-AdoMet) to putrescine (1,4-diaminobutane) to yield spermidine. The chain is Polyamine aminopropyltransferase from Clostridium kluyveri (strain NBRC 12016).